The primary structure comprises 101 residues: MSSEMIHVEVVYALPHEQRVLKLVVEQSATVEEIIRTSGILQMYPEIDLTVNKVGIFSRNVKLDARVRDKDRIEIYRPLLADPKEIRRKRAEQAKAAANQS.

Belongs to the UPF0125 (RnfH) family.

This is UPF0125 protein VC_0850 from Vibrio cholerae serotype O1 (strain ATCC 39315 / El Tor Inaba N16961).